The following is a 354-amino-acid chain: mRNA cap guanine-N(7) methyltransferase 2 (354 aa).

Residues 8-286 (KPEQSHHRLF…LYATFIFQKP (279 aa)) enclose the mRNA cap 0 methyltransferase domain. S-adenosyl-L-methionine contacts are provided by residues Lys-21, Asp-61, and 88–89 (DP).

This sequence belongs to the class I-like SAM-binding methyltransferase superfamily. mRNA cap 0 methyltransferase family.

The protein localises to the nucleus. The catalysed reaction is a 5'-end (5'-triphosphoguanosine)-ribonucleoside in mRNA + S-adenosyl-L-methionine = a 5'-end (N(7)-methyl 5'-triphosphoguanosine)-ribonucleoside in mRNA + S-adenosyl-L-homocysteine. MRNA capping methyltransferase that methylates the N7 position of the added guanosine to the 5'-cap structure of mRNAs. Binds RNA containing 5'-terminal GpppC. In Arabidopsis thaliana (Mouse-ear cress), this protein is mRNA cap guanine-N(7) methyltransferase 2.